We begin with the raw amino-acid sequence, 269 residues long: Hydroxyethylthiazole kinase (269 aa).

Methionine 42 is a substrate binding site. ATP-binding residues include arginine 118 and serine 164. Glycine 191 is a binding site for substrate.

Belongs to the Thz kinase family. It depends on Mg(2+) as a cofactor.

It catalyses the reaction 5-(2-hydroxyethyl)-4-methylthiazole + ATP = 4-methyl-5-(2-phosphooxyethyl)-thiazole + ADP + H(+). It participates in cofactor biosynthesis; thiamine diphosphate biosynthesis; 4-methyl-5-(2-phosphoethyl)-thiazole from 5-(2-hydroxyethyl)-4-methylthiazole: step 1/1. Catalyzes the phosphorylation of the hydroxyl group of 4-methyl-5-beta-hydroxyethylthiazole (THZ). The polypeptide is Hydroxyethylthiazole kinase (Listeria monocytogenes serovar 1/2a (strain ATCC BAA-679 / EGD-e)).